The primary structure comprises 148 residues: Large ribosomal subunit protein bL9 (148 aa).

The protein belongs to the bacterial ribosomal protein bL9 family.

Binds to the 23S rRNA. This Listeria welshimeri serovar 6b (strain ATCC 35897 / DSM 20650 / CCUG 15529 / CIP 8149 / NCTC 11857 / SLCC 5334 / V8) protein is Large ribosomal subunit protein bL9.